The following is a 751-amino-acid chain: Leucine-rich repeat-containing protein 56 homolog (751 aa).

Residues 1-149 form a disordered region; it reads MKKSTVLDAR…IDKSRDNGQL (149 aa). The span at 13 to 22 shows a compositional bias: pro residues; it reads GPLPRRPQQP. Polar residues-rich tracts occupy residues 28-39 and 60-87; these read RNSSQVEKNNAR and HSQS…NLNS. 5 LRR repeats span residues 210–235, 236–256, 258–279, 280–304, and 307–328; these read MPQL…NYAN, LRRL…GACA, VLEE…TEVS, STLQ…TLPQ, and KMKH…VELS. Disordered stretches follow at residues 430–538, 645–698, and 717–751; these read SRSH…QRQQ, TCTH…EKDW, and EAAL…PVVF. 2 stretches are compositionally biased toward polar residues: residues 456–471 and 662–671; these read KNSQ…TNQG and QQEQPTTAGA. The span at 717 to 738 shows a compositional bias: basic and acidic residues; that stretch reads EAALKERVQGSKEVDGGGLEKV. The segment covering 739–751 has biased composition (acidic residues); it reads ESEDEEDVSPVVF.

This sequence belongs to the LRRC56 family.

The protein resides in the cell projection. It localises to the cilium. It is found in the flagellum. Required for the assembly of dynein arms in the distal portion of flagellum axoneme. In Trypanosoma brucei brucei (strain 927/4 GUTat10.1), this protein is Leucine-rich repeat-containing protein 56 homolog.